The sequence spans 355 residues: Protein RecA (355 aa).

Residue 67 to 74 (GPESSGKT) participates in ATP binding.

The protein belongs to the RecA family.

The protein localises to the cytoplasm. Functionally, can catalyze the hydrolysis of ATP in the presence of single-stranded DNA, the ATP-dependent uptake of single-stranded DNA by duplex DNA, and the ATP-dependent hybridization of homologous single-stranded DNAs. It interacts with LexA causing its activation and leading to its autocatalytic cleavage. This Shewanella halifaxensis (strain HAW-EB4) protein is Protein RecA.